Here is a 445-residue protein sequence, read N- to C-terminus: Histidinol dehydrogenase (445 aa).

Positions 136, 200, and 228 each coordinate NAD(+). Substrate-binding residues include T251, Q273, and H276. Zn(2+) contacts are provided by Q273 and H276. Residues E342 and H343 each act as proton acceptor in the active site. Substrate contacts are provided by H343, D376, E430, and H435. Residue D376 coordinates Zn(2+). A Zn(2+)-binding site is contributed by H435.

This sequence belongs to the histidinol dehydrogenase family. Zn(2+) is required as a cofactor.

It catalyses the reaction L-histidinol + 2 NAD(+) + H2O = L-histidine + 2 NADH + 3 H(+). It functions in the pathway amino-acid biosynthesis; L-histidine biosynthesis; L-histidine from 5-phospho-alpha-D-ribose 1-diphosphate: step 9/9. Catalyzes the sequential NAD-dependent oxidations of L-histidinol to L-histidinaldehyde and then to L-histidine. This is Histidinol dehydrogenase (hisD) from Mycolicibacterium smegmatis (Mycobacterium smegmatis).